Here is a 182-residue protein sequence, read N- to C-terminus: MQGSLISSEIAEPYAQALLSVAQSSGQLEAIGGEIKSLLELLENAPDLRAFIGNPVIKEEAKKAVLSQVMGSSANPYLTNFMMLLVDKRRIQFLEPVCQQYLTLARVLTNTVLAEVSSATELNDSQKQIVIDKVKTLTGANVVELKTKVDGSLIGGVVIKVGSQVFDASIRGQLQRLSLSLR.

It belongs to the ATPase delta chain family. F-type ATPases have 2 components, F(1) - the catalytic core - and F(0) - the membrane proton channel. F(1) has five subunits: alpha(3), beta(3), gamma(1), delta(1), epsilon(1). CF(0) has four main subunits: a(1), b(1), b'(1) and c(10-14). The alpha and beta chains form an alternating ring which encloses part of the gamma chain. F(1) is attached to F(0) by a central stalk formed by the gamma and epsilon chains, while a peripheral stalk is formed by the delta, b and b' chains.

The protein localises to the cellular thylakoid membrane. Its function is as follows. F(1)F(0) ATP synthase produces ATP from ADP in the presence of a proton or sodium gradient. F-type ATPases consist of two structural domains, F(1) containing the extramembraneous catalytic core and F(0) containing the membrane proton channel, linked together by a central stalk and a peripheral stalk. During catalysis, ATP synthesis in the catalytic domain of F(1) is coupled via a rotary mechanism of the central stalk subunits to proton translocation. Functionally, this protein is part of the stalk that links CF(0) to CF(1). It either transmits conformational changes from CF(0) to CF(1) or is implicated in proton conduction. This Microcystis aeruginosa (strain NIES-843 / IAM M-2473) protein is ATP synthase subunit delta.